Reading from the N-terminus, the 565-residue chain is Adenine deaminase (565 aa).

Belongs to the metallo-dependent hydrolases superfamily. Adenine deaminase family. Mn(2+) serves as cofactor.

It catalyses the reaction adenine + H2O + H(+) = hypoxanthine + NH4(+). The protein is Adenine deaminase of Sinorhizobium fredii (strain NBRC 101917 / NGR234).